A 200-amino-acid chain; its full sequence is Peptidyl-tRNA hydrolase (200 aa).

F16 is a tRNA binding site. Catalysis depends on H21, which acts as the Proton acceptor. F67, N69, and N115 together coordinate tRNA.

Belongs to the PTH family. As to quaternary structure, monomer.

Its subcellular location is the cytoplasm. It catalyses the reaction an N-acyl-L-alpha-aminoacyl-tRNA + H2O = an N-acyl-L-amino acid + a tRNA + H(+). Its function is as follows. Hydrolyzes ribosome-free peptidyl-tRNAs (with 1 or more amino acids incorporated), which drop off the ribosome during protein synthesis, or as a result of ribosome stalling. Catalyzes the release of premature peptidyl moieties from peptidyl-tRNA molecules trapped in stalled 50S ribosomal subunits, and thus maintains levels of free tRNAs and 50S ribosomes. The sequence is that of Peptidyl-tRNA hydrolase from Prochlorococcus marinus (strain MIT 9215).